The following is a 1239-amino-acid chain: Anion exchange protein 2 (1239 aa).

A disordered region spans residues 1-237; sequence MSSAPRRPAK…HRSYNLQERR (237 aa). The Cytoplasmic segment spans residues 1–706; it reads MSSAPRRPAK…DFRDALDPQC (706 aa). Basic and acidic residues-rich tracts occupy residues 37–49 and 58–75; these read ELHR…RFEE and GGEE…EYHR. Composition is skewed to basic residues over residues 76–85 and 94–110; these read QSSHHIHHPL and RRRK…RRRP. Ser113, Ser132, Ser144, Ser170, and Ser172 each carry phosphoserine. Residues 120 to 133 show a composition bias toward acidic residues; it reads TIEEGEEDEDEASE. Residues 141–155 are compositionally biased toward low complexity; that stretch reads TQPSPVSTPSSVQFF. A compositionally biased stretch (low complexity) spans 189 to 207; that stretch reads GAQAGTQVEEAEAVAVASG. The segment covering 208–217 has biased composition (gly residues); the sequence is TAGGDDGGAS. A Phosphoserine modification is found at Ser241. Position 255 is a phosphothreonine (Thr255). Position 272 is an N6-methyllysine (Lys272). A disordered region spans residues 285 to 318; that stretch reads HLVRKNAKGSTQSGREGREPGPTPRARPRAPHKP. The residue at position 441 (Ser441) is a Phosphoserine. Residues 447–468 form a disordered region; sequence SLLGHHHGQGAESDPHVTEPLI. Membrane (anion exchange) stretches follow at residues 706–1239 and 708–1239; these read CLAA…PMPV and AAVI…PMPV. 4 helical membrane passes run 707-727, 752-772, 794-814, and 824-844; these read LAAV…FGGL, FCLL…LLVF, IGFW…SFLV, and IFAF…LVKI. The Extracellular portion of the chain corresponds to 845–895; sequence FQEHPLHGCSASNSSEVDGGENMTWAVARPTLGPGNRSLAGQSGQGKPRGQ. Residues Asn857, Asn866, and Asn880 are each glycosylated (N-linked (GlcNAc...) asparagine). A helical transmembrane segment spans residues 896 to 916; that stretch reads PNTALLSLVLMAGTFFIAFFL. At 917–931 the chain is on the cytoplasmic side; it reads RKFKNSRFFPGRIRR. 5 helical membrane passes run 932 to 952, 987 to 1007, 1034 to 1054, 1088 to 1108, and 1111 to 1131; these read VIGD…DYSI, FPVW…ILIF, LLLI…WLAA, RVTG…GDLL, and IPLA…LNGI. Cys1171 carries the S-palmitoyl cysteine lipid modification. The chain crosses the membrane as a helical span at residues 1172 to 1192; it reads LALLWAVMSTAASLAFPFILI.

The protein belongs to the anion exchanger (TC 2.A.31) family.

The protein resides in the apical cell membrane. The protein localises to the basolateral cell membrane. It carries out the reaction hydrogencarbonate(in) + chloride(out) = hydrogencarbonate(out) + chloride(in). Functionally, sodium-independent anion exchanger which mediates the electroneutral exchange of chloride for bicarbonate ions across the cell membrane. Plays an important role in osteoclast differentiation and function. Regulates bone resorption and calpain-dependent actin cytoskeleton organization in osteoclasts via anion exchange-dependent control of pH. Essential for intracellular pH regulation in CD8(+) T-cells upon CD3 stimulation, modulating CD8(+) T-cell response. The sequence is that of Anion exchange protein 2 (SLC4A2) from Pongo abelii (Sumatran orangutan).